A 202-amino-acid chain; its full sequence is Ras-related protein Rab-18 (202 aa).

GTP-binding residues include S20, G23, K24, S25, S26, D37, P38, T43, G69, K126, D128, and A155. Residues 40–48 carry the Effector region motif; it reads QAATIGVDF. The disordered stretch occupies residues 183–202; the sequence is RPTFRLGQPTDTSSGNLCGC. Positions 191-202 are enriched in polar residues; sequence PTDTSSGNLCGC. S-geranylgeranyl cysteine attachment occurs at residues C200 and C202. A Cysteine methyl ester modification is found at C202.

Belongs to the small GTPase superfamily. Rab family.

The catalysed reaction is GTP + H2O = GDP + phosphate + H(+). The small GTPases Rab are key regulators of intracellular membrane trafficking, from the formation of transport vesicles to their fusion with membranes. Rabs cycle between an inactive GDP-bound form and an active GTP-bound form that is able to recruit to membranes different sets of downstream effectors directly responsible for vesicle formation, movement, tethering and fusion. Plays a role in apical endocytosis/recycling. May be implicated in transport between the plasma membrane and early endosomes. The polypeptide is Ras-related protein Rab-18 (rab-18) (Caenorhabditis briggsae).